The primary structure comprises 516 residues: Protein psiC (516 aa).

Residues 1–19 (MKILILSFFLILGINLVFC) form the signal peptide. The 141-residue stretch at 109-249 (ESKDEPGIYV…YDACGVCLGK (141 aa)) folds into the PA14 domain. Asn-134, Asn-234, Asn-250, Asn-284, Asn-333, Asn-357, and Asn-367 each carry an N-linked (GlcNAc...) asparagine glycan. Residues 418 to 427 (DIIIDSSSDI) show a composition bias toward low complexity. The disordered stretch occupies residues 418-465 (DIIIDSSSDIPIPTLSPSPQPSRFPTDTPTNTPMPPTRPPTPTEDPKI). The span at 449 to 460 (TPMPPTRPPTPT) shows a compositional bias: pro residues.

Belongs to the prespore-cell-inducing factor family.

The protein localises to the secreted. This is Protein psiC (psiC) from Dictyostelium discoideum (Social amoeba).